A 257-amino-acid polypeptide reads, in one-letter code: Ubiquinone biosynthesis O-methyltransferase (257 aa).

4 residues coordinate S-adenosyl-L-methionine: R43, G77, D98, and M144.

Belongs to the methyltransferase superfamily. UbiG/COQ3 family.

The catalysed reaction is a 3-demethylubiquinol + S-adenosyl-L-methionine = a ubiquinol + S-adenosyl-L-homocysteine + H(+). It catalyses the reaction a 3-(all-trans-polyprenyl)benzene-1,2-diol + S-adenosyl-L-methionine = a 2-methoxy-6-(all-trans-polyprenyl)phenol + S-adenosyl-L-homocysteine + H(+). Its pathway is cofactor biosynthesis; ubiquinone biosynthesis. Its function is as follows. O-methyltransferase that catalyzes the 2 O-methylation steps in the ubiquinone biosynthetic pathway. The protein is Ubiquinone biosynthesis O-methyltransferase of Psychrobacter arcticus (strain DSM 17307 / VKM B-2377 / 273-4).